We begin with the raw amino-acid sequence, 597 residues long: UvrABC system protein C (597 aa).

The 79-residue stretch at 15 to 93 (DNPGVYQYYD…IKTLQPRYNV (79 aa)) folds into the GIY-YIG domain. The 36-residue stretch at 207–242 (KESLKDFKKLMNNYAQNLQFEEAQKIKEKIEVLENY) folds into the UVR domain.

It belongs to the UvrC family. As to quaternary structure, interacts with UvrB in an incision complex.

It is found in the cytoplasm. Functionally, the UvrABC repair system catalyzes the recognition and processing of DNA lesions. UvrC both incises the 5' and 3' sides of the lesion. The N-terminal half is responsible for the 3' incision and the C-terminal half is responsible for the 5' incision. In Flavobacterium johnsoniae (strain ATCC 17061 / DSM 2064 / JCM 8514 / BCRC 14874 / CCUG 350202 / NBRC 14942 / NCIMB 11054 / UW101) (Cytophaga johnsonae), this protein is UvrABC system protein C.